Reading from the N-terminus, the 462-residue chain is 3-isopropylmalate dehydratase large subunit (462 aa).

[4Fe-4S] cluster is bound by residues Cys337, Cys397, and Cys400.

Belongs to the aconitase/IPM isomerase family. LeuC type 1 subfamily. In terms of assembly, heterodimer of LeuC and LeuD. It depends on [4Fe-4S] cluster as a cofactor.

The enzyme catalyses (2R,3S)-3-isopropylmalate = (2S)-2-isopropylmalate. It participates in amino-acid biosynthesis; L-leucine biosynthesis; L-leucine from 3-methyl-2-oxobutanoate: step 2/4. Its function is as follows. Catalyzes the isomerization between 2-isopropylmalate and 3-isopropylmalate, via the formation of 2-isopropylmaleate. The protein is 3-isopropylmalate dehydratase large subunit of Listeria monocytogenes serovar 1/2a (strain ATCC BAA-679 / EGD-e).